The primary structure comprises 22 residues: Caerin-3.5 (22 aa).

The residue at position 22 (K22) is a Lysine amide.

As to expression, expressed by the skin dorsal glands.

The protein resides in the secreted. Functionally, shows significant activity against Gram-positive organisms, but is less effective against Gram-negative organisms. The chain is Caerin-3.5 from Ranoidea gracilenta (Dainty green tree frog).